We begin with the raw amino-acid sequence, 768 residues long: Actin filament-associated protein 1-like 1 (768 aa).

Residues 83–145 (LRDMSDDGEP…GKSPEYISSH (63 aa)) are disordered. Phosphoserine is present on residues serine 87, serine 93, serine 97, serine 103, and serine 153. A compositionally biased stretch (polar residues) spans 165–185 (SYPTTRMNGELKNSYNDSDAM). The interval 165–211 (SYPTTRMNGELKNSYNDSDAMSSSYESYDEEEEEEKGRQPKHQWPSE) is disordered. The 97-residue stretch at 220 to 316 (DCRICAFLLR…WLKVIREVSR (97 aa)) folds into the PH 1 domain. Residues serine 329 and serine 343 each carry the phosphoserine modification. Basic and acidic residues predominate over residues 340–349 (KRLSQEKQNS). The tract at residues 340–382 (KRLSQEKQNSDSDSLGMNDSGSTLGRREACEHGKGKKNSLAEL) is disordered. Over residues 350–362 (DSDSLGMNDSGST) the composition is skewed to polar residues. A PH 2 domain is found at 418 to 512 (EVPCCGYLNV…WLGLLLVEMG (95 aa)). Tyrosine 557 is subject to Phosphotyrosine. The interval 564–609 (KVQDEEPQRPTGAQVKRHASSCSEKSHRADPQVKVKRHASSANQYK) is disordered. Basic and acidic residues predominate over residues 587–596 (EKSHRADPQV). Residues 611-701 (GKNRAEEDAR…AVKERLQQSL (91 aa)) are a coiled coil. The interval 705-768 (PALGLSVSNK…KAKEWEMKKT (64 aa)) is disordered. Residues 710–734 (SVSNKNKSQDTTNKPQSNAPEQSLP) are compositionally biased toward polar residues. At serine 747 the chain carries Phosphoserine. Over residues 759 to 768 (KAKEWEMKKT) the composition is skewed to basic and acidic residues.

As to quaternary structure, interacts with CTTN.

The protein localises to the cytoplasm. The protein resides in the cell projection. It localises to the podosome. It is found in the invadopodium. Its subcellular location is the cytoskeleton. The protein localises to the stress fiber. Its function is as follows. May be involved in podosome and invadosome formation. This is Actin filament-associated protein 1-like 1 (Afap1l1) from Mus musculus (Mouse).